The primary structure comprises 189 residues: Putative ankyrin repeat protein L38 (189 aa).

One copy of the ANK repeat lies at 108–137 (YGKTPLITAIKSGNCIMVKKLIDYGADFNK).

The sequence is that of Putative ankyrin repeat protein L38 from Acanthamoeba polyphaga mimivirus (APMV).